Reading from the N-terminus, the 513-residue chain is ATP synthase subunit alpha (513 aa).

169–176 (GDRQTGKT) contributes to the ATP binding site.

Belongs to the ATPase alpha/beta chains family. F-type ATPases have 2 components, CF(1) - the catalytic core - and CF(0) - the membrane proton channel. CF(1) has five subunits: alpha(3), beta(3), gamma(1), delta(1), epsilon(1). CF(0) has three main subunits: a(1), b(2) and c(9-12). The alpha and beta chains form an alternating ring which encloses part of the gamma chain. CF(1) is attached to CF(0) by a central stalk formed by the gamma and epsilon chains, while a peripheral stalk is formed by the delta and b chains.

It is found in the cell inner membrane. It catalyses the reaction ATP + H2O + 4 H(+)(in) = ADP + phosphate + 5 H(+)(out). Functionally, produces ATP from ADP in the presence of a proton gradient across the membrane. The alpha chain is a regulatory subunit. This Haemophilus influenzae (strain ATCC 51907 / DSM 11121 / KW20 / Rd) protein is ATP synthase subunit alpha.